Reading from the N-terminus, the 238-residue chain is Uridylate kinase (238 aa).

12 to 15 (KLSG) provides a ligand contact to ATP. Residue G54 coordinates UMP. Positions 55 and 59 each coordinate ATP. Residues D74 and 135–142 (TGNPYFTT) contribute to the UMP site. 3 residues coordinate ATP: T162, Y168, and D171.

Belongs to the UMP kinase family. As to quaternary structure, homohexamer.

The protein localises to the cytoplasm. It catalyses the reaction UMP + ATP = UDP + ADP. It functions in the pathway pyrimidine metabolism; CTP biosynthesis via de novo pathway; UDP from UMP (UMPK route): step 1/1. With respect to regulation, inhibited by UTP. In terms of biological role, catalyzes the reversible phosphorylation of UMP to UDP. The polypeptide is Uridylate kinase (Lawsonia intracellularis (strain PHE/MN1-00)).